Reading from the N-terminus, the 176-residue chain is ATP synthase subunit delta (176 aa).

It belongs to the ATPase delta chain family. In terms of assembly, F-type ATPases have 2 components, F(1) - the catalytic core - and F(0) - the membrane proton channel. F(1) has five subunits: alpha(3), beta(3), gamma(1), delta(1), epsilon(1). F(0) has three main subunits: a(1), b(2) and c(10-14). The alpha and beta chains form an alternating ring which encloses part of the gamma chain. F(1) is attached to F(0) by a central stalk formed by the gamma and epsilon chains, while a peripheral stalk is formed by the delta and b chains.

The protein localises to the cell inner membrane. In terms of biological role, f(1)F(0) ATP synthase produces ATP from ADP in the presence of a proton or sodium gradient. F-type ATPases consist of two structural domains, F(1) containing the extramembraneous catalytic core and F(0) containing the membrane proton channel, linked together by a central stalk and a peripheral stalk. During catalysis, ATP synthesis in the catalytic domain of F(1) is coupled via a rotary mechanism of the central stalk subunits to proton translocation. This protein is part of the stalk that links CF(0) to CF(1). It either transmits conformational changes from CF(0) to CF(1) or is implicated in proton conduction. This Campylobacter concisus (strain 13826) protein is ATP synthase subunit delta.